The sequence spans 211 residues: ATP phosphoribosyltransferase (211 aa).

Belongs to the ATP phosphoribosyltransferase family. Short subfamily. Heteromultimer composed of HisG and HisZ subunits.

The protein resides in the cytoplasm. The enzyme catalyses 1-(5-phospho-beta-D-ribosyl)-ATP + diphosphate = 5-phospho-alpha-D-ribose 1-diphosphate + ATP. It functions in the pathway amino-acid biosynthesis; L-histidine biosynthesis; L-histidine from 5-phospho-alpha-D-ribose 1-diphosphate: step 1/9. In terms of biological role, catalyzes the condensation of ATP and 5-phosphoribose 1-diphosphate to form N'-(5'-phosphoribosyl)-ATP (PR-ATP). Has a crucial role in the pathway because the rate of histidine biosynthesis seems to be controlled primarily by regulation of HisG enzymatic activity. The chain is ATP phosphoribosyltransferase from Ectopseudomonas mendocina (strain ymp) (Pseudomonas mendocina).